A 429-amino-acid chain; its full sequence is Serine--tRNA ligase (429 aa).

235–237 (TAE) contacts L-serine. ATP is bound at residue 266 to 268 (RSE). Residue Glu-289 participates in L-serine binding. ATP is bound at residue 353–356 (EISS). Ser-389 is a binding site for L-serine.

Belongs to the class-II aminoacyl-tRNA synthetase family. Type-1 seryl-tRNA synthetase subfamily. Homodimer. The tRNA molecule binds across the dimer.

It localises to the cytoplasm. It carries out the reaction tRNA(Ser) + L-serine + ATP = L-seryl-tRNA(Ser) + AMP + diphosphate + H(+). It catalyses the reaction tRNA(Sec) + L-serine + ATP = L-seryl-tRNA(Sec) + AMP + diphosphate + H(+). Its pathway is aminoacyl-tRNA biosynthesis; selenocysteinyl-tRNA(Sec) biosynthesis; L-seryl-tRNA(Sec) from L-serine and tRNA(Sec): step 1/1. Functionally, catalyzes the attachment of serine to tRNA(Ser). Is also able to aminoacylate tRNA(Sec) with serine, to form the misacylated tRNA L-seryl-tRNA(Sec), which will be further converted into selenocysteinyl-tRNA(Sec). The protein is Serine--tRNA ligase of Haemophilus influenzae (strain 86-028NP).